Here is a 77-residue protein sequence, read N- to C-terminus: MKLSVRFISAALLLFMVFIATGMGPVTVEARTCESKSHRFKGPCVSTHNCANVCHNEGFGGGKCRGFRRRCYCTRHC.

Positions 1–30 (MKLSVRFISAALLLFMVFIATGMGPVTVEA) are cleaved as a signal peptide. Cystine bridges form between Cys33–Cys77, Cys44–Cys64, Cys50–Cys71, and Cys54–Cys73.

This sequence belongs to the DEFL family. In terms of tissue distribution, expressed in the whole plant except roots.

The protein localises to the secreted. In terms of biological role, confers broad-spectrum resistance to pathogens. The polypeptide is Defensin-like protein 1 (PDF2.3) (Arabidopsis thaliana (Mouse-ear cress)).